Here is a 631-residue protein sequence, read N- to C-terminus: uncharacterized protein (631 aa).

The span at 1–19 shows a compositional bias: polar residues; the sequence is MSKMGSSSMGELQDGITQE. Residues 1-92 are disordered; it reads MSKMGSSSMG…EENYPRLQTT (92 aa). Positions 67-76 are enriched in basic residues; that stretch reads KKKKKKKLKK. The region spanning 277–426 is the Exonuclease domain; the sequence is LAIDCEMVRT…EDALACVDLL (150 aa). A compositionally biased stretch (polar residues) spans 517-526; that stretch reads ANRNTKQENN. The tract at residues 517-540 is disordered; the sequence is ANRNTKQENNSDTDTENDSVEEDQ. A compositionally biased stretch (acidic residues) spans 527–540; it reads SDTDTENDSVEEDQ.

This sequence belongs to the REXO1/REXO3 family.

It localises to the nucleus. This is an uncharacterized protein from Schizosaccharomyces pombe (strain 972 / ATCC 24843) (Fission yeast).